The primary structure comprises 314 residues: L-lactate dehydrogenase 2 (314 aa).

NAD(+)-binding positions include valine 16, aspartate 37, lysine 42, tyrosine 68, and 82-83 (GL). Substrate-binding positions include glutamine 85, arginine 91, and 123–126 (NPVD). Residues 121-123 (ATN) and serine 146 contribute to the NAD(+) site. 151–154 (DSAR) lines the substrate pocket. Beta-D-fructose 1,6-bisphosphate is bound by residues arginine 156 and histidine 171. Histidine 178 functions as the Proton acceptor in the catalytic mechanism. Tyrosine 223 is modified (phosphotyrosine). Threonine 232 contacts substrate.

It belongs to the LDH/MDH superfamily. LDH family. As to quaternary structure, homotetramer.

It is found in the cytoplasm. The enzyme catalyses (S)-lactate + NAD(+) = pyruvate + NADH + H(+). It participates in fermentation; pyruvate fermentation to lactate; (S)-lactate from pyruvate: step 1/1. Its activity is regulated as follows. Allosterically activated by fructose 1,6-bisphosphate (FBP). Catalyzes the conversion of lactate to pyruvate. The sequence is that of L-lactate dehydrogenase 2 from Bacillus anthracis.